We begin with the raw amino-acid sequence, 179 residues long: 3-hydroxyanthranilate 3,4-dioxygenase (179 aa).

Arg47 provides a ligand contact to O2. His51, Glu57, and His96 together coordinate Fe cation. Residue Glu57 participates in substrate binding. Residues Arg100 and Glu110 each coordinate substrate. Fe cation-binding residues include Cys125, Cys128, Cys162, and Cys165.

This sequence belongs to the 3-HAO family. Fe(2+) serves as cofactor.

The enzyme catalyses 3-hydroxyanthranilate + O2 = (2Z,4Z)-2-amino-3-carboxymuconate 6-semialdehyde. The protein operates within cofactor biosynthesis; NAD(+) biosynthesis; quinolinate from L-kynurenine: step 3/3. In terms of biological role, catalyzes the oxidative ring opening of 3-hydroxyanthranilate to 2-amino-3-carboxymuconate semialdehyde, which spontaneously cyclizes to quinolinate. This is 3-hydroxyanthranilate 3,4-dioxygenase from Bacillus cereus (strain ATCC 10987 / NRS 248).